Reading from the N-terminus, the 87-residue chain is Large ribosomal subunit protein bL27 (87 aa).

Belongs to the bacterial ribosomal protein bL27 family.

The sequence is that of Large ribosomal subunit protein bL27 from Stenotrophomonas maltophilia (strain K279a).